The chain runs to 555 residues: ATP-dependent RNA helicase MRH4, mitochondrial (555 aa).

A mitochondrion-targeting transit peptide spans 1–25 (MFKLLIPNKYNYVIRPLVRFKSIKS). A Q motif motif is present at residues 101–108 (DIKPTPVQ). One can recognise a Helicase ATP-binding domain in the interval 144–361 (ANEIQKTKVF…SKLFPDQRSL (218 aa)). An ATP-binding site is contributed by 157-164 (AETGSGKT). The DEAD box signature appears at 309–312 (DEAD). The Helicase C-terminal domain maps to 395–555 (CLAQALYAIS…NAIIRGLRIG (161 aa)).

It belongs to the DEAD box helicase family. MRH4 subfamily.

It is found in the mitochondrion. The enzyme catalyses ATP + H2O = ADP + phosphate + H(+). Functionally, ATP-binding RNA helicase involved in mitochondrial RNA metabolism. Required for maintenance of mitochondrial DNA. The chain is ATP-dependent RNA helicase MRH4, mitochondrial (MRH4) from Candida albicans (strain SC5314 / ATCC MYA-2876) (Yeast).